The chain runs to 467 residues: Gamma-aminobutyric acid receptor subunit gamma-3 (467 aa).

The N-terminal stretch at 1-17 is a signal peptide; that stretch reads MAPKLLLLLCLFSGLHA. The Extracellular portion of the chain corresponds to 18-256; the sequence is RSRKVEEDEY…FELSRRMGYF (239 aa). Asparagine 110 carries N-linked (GlcNAc...) asparagine glycosylation. Cysteines 171 and 185 form a disulfide. N-linked (GlcNAc...) asparagine glycosylation occurs at asparagine 228. Residues 257-277 traverse the membrane as a helical segment; it reads TIQTYIPCILTVVLSWVSFWI. Over 278–283 the chain is Cytoplasmic; sequence KKDATP. A helical transmembrane segment spans residues 284–303; it reads ARTALGITTVLTMTTLSTIA. The Extracellular segment spans residues 304–311; the sequence is RKSLPRVS. A helical transmembrane segment spans residues 312 to 332; sequence YVTAMDLFVTVCFLFVFAALM. The Cytoplasmic segment spans residues 333–446; the sequence is EYATLNYYSS…DILELDSYSR (114 aa). The chain crosses the membrane as a helical span at residues 447–467; the sequence is VFFPTSFLLFNLVYWVGYLYL.

The protein belongs to the ligand-gated ion channel (TC 1.A.9) family. Gamma-aminobutyric acid receptor (TC 1.A.9.5) subfamily. GABRG3 sub-subfamily. As to quaternary structure, heteropentamer, formed by a combination of alpha (GABRA1-6), beta (GABRB1-3), gamma (GABRG1-3), delta (GABRD), epsilon (GABRE), rho (GABRR1-3), pi (GABRP) and theta (GABRQ) chains, each subunit exhibiting distinct physiological and pharmacological properties. In terms of processing, may be palmitoylated. Expressed in brain.

It localises to the postsynaptic cell membrane. Its subcellular location is the cell membrane. It catalyses the reaction chloride(in) = chloride(out). Functionally, gamma subunit of the heteropentameric ligand-gated chloride channel gated by gamma-aminobutyric acid (GABA), a major inhibitory neurotransmitter in the brain. GABA-gated chloride channels, also named GABA(A) receptors (GABAAR), consist of five subunits arranged around a central pore and contain GABA active binding site(s) located at the alpha and beta subunit interface(s). When activated by GABA, GABAARs selectively allow the flow of chloride across the cell membrane down their electrochemical gradient. The polypeptide is Gamma-aminobutyric acid receptor subunit gamma-3 (Homo sapiens (Human)).